Consider the following 523-residue polypeptide: MATCFLLRNFCAARPALRPPGRLLREPAGAQRRSYVGGPADLHADLLRGDSFVGGRWLPTPATFPVYDPASGAKLGTVADCGVPEARAAVRAAYDAFSSWKEISVKERSSLLRKWYDLMIQNKDELAKIITAESGKPLKEAQGEILYSAFFLEWFSEEARRVYGDIIYTSAKDKRGLVLKQPVGVASIITPWNFPSAMITRKVGAALAAGCTVVVKPAEDTPYSALALAQLANQAGIPPGVYNVIPCSRTKAKEVGEVLCTDPLVSKISFTGSTATGKILLHHAANSVKRVSMELGGLAPFIVFDSANVDQAVAGAMASKFRNAGQTCVCSNRFLVQRGIHDSFVTKFAEAMKKSLRVGNGFEEGTTQGPLINEKAVEKVEKHVNDAVAKGATVVTGGKRHQSGGNFFEPTLLSNVTRDMLCITEETFGPVAPVIKFDKEEEAVAIANAADVGLAGYFYSQDPAQIWRVAEQLEVGMVGVNEGLISSVECPFGGVKQSGLGREGSKYGIDEYLEVKYVCYGGL.

The transit peptide at 1-35 (MATCFLLRNFCAARPALRPPGRLLREPAGAQRRSY) directs the protein to the mitochondrion. Position 114 is an N6-acetyllysine; alternate (Lys-114). Lys-114 carries the post-translational modification N6-succinyllysine; alternate. An N6-succinyllysine mark is found at Lys-123 and Lys-172. NAD(+) contacts are provided by residues Arg-201 and 216–219 (KPAE). Arg-201 contributes to the substrate binding site. N6-acetyllysine; alternate is present on Lys-253. Position 253 is an N6-succinyllysine; alternate (Lys-253). 272-277 (GSTATG) provides a ligand contact to NAD(+). The active-site Proton acceptor is the Glu-294. Residue Arg-322 participates in substrate binding. The Nucleophile role is filled by Cys-328. A disulfide bridge connects residues Cys-328 and Cys-330. At Lys-353 the chain carries N6-acetyllysine. An N6-succinyllysine modification is found at Lys-390. At Lys-399 the chain carries N6-acetyllysine. Ser-486 provides a ligand contact to substrate. The residue at position 487 (Ser-487) is a Phosphoserine.

Belongs to the aldehyde dehydrogenase family. Homotetramer. Brain, pancreas, heart, liver, skeletal muscle, kidney. Lower in spleen, lung, kidney and testis.

It is found in the mitochondrion. The catalysed reaction is succinate semialdehyde + NAD(+) + H2O = succinate + NADH + 2 H(+). Its pathway is amino-acid degradation; 4-aminobutanoate degradation. Redox-regulated. Inhibited under oxydizing conditions. Functionally, catalyzes one step in the degradation of the inhibitory neurotransmitter gamma-aminobutyric acid (GABA). In Rattus norvegicus (Rat), this protein is Succinate-semialdehyde dehydrogenase, mitochondrial (Aldh5a1).